A 461-amino-acid chain; its full sequence is Bifunctional protein GlmU (461 aa).

The segment at 1–227 (MEVIALILAA…PDEVLGVNDR (227 aa)) is pyrophosphorylase. Residues 8–11 (LAAG), lysine 22, glutamine 73, 78–79 (GT), 100–102 (YGD), glycine 137, glutamate 152, asparagine 167, and asparagine 225 each bind UDP-N-acetyl-alpha-D-glucosamine. Aspartate 102 contributes to the Mg(2+) binding site. Mg(2+) is bound at residue asparagine 225. A linker region spans residues 228–248 (RQLAELERIYQVHQARALMER). Residues 249–461 (GVTLRDPARF…EKARKESCAE (213 aa)) form an N-acetyltransferase region. Residues arginine 332 and lysine 350 each contribute to the UDP-N-acetyl-alpha-D-glucosamine site. The active-site Proton acceptor is the histidine 362. 2 residues coordinate UDP-N-acetyl-alpha-D-glucosamine: tyrosine 365 and asparagine 376. Acetyl-CoA-binding positions include alanine 379, 385-386 (NY), serine 404, alanine 422, and arginine 439.

The protein in the N-terminal section; belongs to the N-acetylglucosamine-1-phosphate uridyltransferase family. It in the C-terminal section; belongs to the transferase hexapeptide repeat family. In terms of assembly, homotrimer. Mg(2+) is required as a cofactor.

The protein resides in the cytoplasm. The catalysed reaction is alpha-D-glucosamine 1-phosphate + acetyl-CoA = N-acetyl-alpha-D-glucosamine 1-phosphate + CoA + H(+). It catalyses the reaction N-acetyl-alpha-D-glucosamine 1-phosphate + UTP + H(+) = UDP-N-acetyl-alpha-D-glucosamine + diphosphate. It participates in nucleotide-sugar biosynthesis; UDP-N-acetyl-alpha-D-glucosamine biosynthesis; N-acetyl-alpha-D-glucosamine 1-phosphate from alpha-D-glucosamine 6-phosphate (route II): step 2/2. Its pathway is nucleotide-sugar biosynthesis; UDP-N-acetyl-alpha-D-glucosamine biosynthesis; UDP-N-acetyl-alpha-D-glucosamine from N-acetyl-alpha-D-glucosamine 1-phosphate: step 1/1. It functions in the pathway bacterial outer membrane biogenesis; LPS lipid A biosynthesis. Its function is as follows. Catalyzes the last two sequential reactions in the de novo biosynthetic pathway for UDP-N-acetylglucosamine (UDP-GlcNAc). The C-terminal domain catalyzes the transfer of acetyl group from acetyl coenzyme A to glucosamine-1-phosphate (GlcN-1-P) to produce N-acetylglucosamine-1-phosphate (GlcNAc-1-P), which is converted into UDP-GlcNAc by the transfer of uridine 5-monophosphate (from uridine 5-triphosphate), a reaction catalyzed by the N-terminal domain. The protein is Bifunctional protein GlmU of Methylococcus capsulatus (strain ATCC 33009 / NCIMB 11132 / Bath).